A 485-amino-acid polypeptide reads, in one-letter code: MNDSITVRGKDRYKSGVMEYKKMGYWEPDYVPKDTDVIALFRVTPQDGVDPIEASAAVAGESSTATWTVVWTDRLTAAEKYRAKCYRVDPVPNSPGQYFAYIAYDLDLFENGSIANLSASIIGNVFGFKPLKALRLEDMRLPIAYVKTFQGPATGIVVERERMDKFGRPLLGATVKPKLGLSGRNYGRVVYEALKGGLDFTKDDENINSQPFMHWRERFLYCMEAVNKAQAASGEIKGTYLNVTAGTMEEMYERAEFAKQLGSVIIMIDLVIGYTAIQSMAKWARRNDMILHLHRAGHSTYTRQRNHGVSFRVIAKWMRLAGVDHIHAGTVVGKLEGDPSTTKGYYDICREDYNPANLEHGLFFDQPWASLNKLMPVASGGIHAGQMHQLLDLLGEDVVLQFGGGTIGHPMGIAAGATANRVALEAMILARNEGRDYVHEGPEILAKAAQTCTPLKAALDTWKNVSFNYESTDTPDYAPTPSVSM.

Substrate contacts are provided by Asn124 and Thr174. Residue Lys176 is the Proton acceptor of the active site. Lys178 contacts substrate. Residues Lys202, Asp204, and Glu205 each coordinate Mg(2+). Lys202 carries the post-translational modification N6-carboxylysine. His294 (proton acceptor) is an active-site residue. Positions 295, 327, and 379 each coordinate substrate.

The protein belongs to the RuBisCO large chain family. Type I subfamily. In terms of assembly, heterohexadecamer of 8 large chains and 8 small chains. Mg(2+) is required as a cofactor.

The enzyme catalyses 2 (2R)-3-phosphoglycerate + 2 H(+) = D-ribulose 1,5-bisphosphate + CO2 + H2O. It catalyses the reaction D-ribulose 1,5-bisphosphate + O2 = 2-phosphoglycolate + (2R)-3-phosphoglycerate + 2 H(+). Its function is as follows. RuBisCO catalyzes two reactions: the carboxylation of D-ribulose 1,5-bisphosphate, the primary event in carbon dioxide fixation, as well as the oxidative fragmentation of the pentose substrate. Both reactions occur simultaneously and in competition at the same active site. This Rhodopseudomonas palustris (strain BisB5) protein is Ribulose bisphosphate carboxylase large chain 2.